A 338-amino-acid polypeptide reads, in one-letter code: UDP-glucose 4-epimerase (338 aa).

NAD(+)-binding positions include 11 to 12 (YI), 31 to 36 (DNLCNS), 58 to 59 (DI), 80 to 84 (FAGLK), Asn99, Ser124, Tyr149, Lys153, and Phe178. Residues Ser124 and Tyr149 each contribute to the substrate site. Catalysis depends on Tyr149, which acts as the Proton acceptor. Residues Asn179, 199–200 (NL), 216–218 (AVF), Arg231, 292–295 (RDGD), and Tyr299 each bind substrate.

The protein belongs to the NAD(P)-dependent epimerase/dehydratase family. In terms of assembly, homodimer. It depends on NAD(+) as a cofactor.

It catalyses the reaction UDP-alpha-D-glucose = UDP-alpha-D-galactose. Its pathway is carbohydrate metabolism; galactose metabolism. Its function is as follows. Involved in the metabolism of galactose. Catalyzes the conversion of UDP-galactose (UDP-Gal) to UDP-glucose (UDP-Glc) through a mechanism involving the transient reduction of NAD. This chain is UDP-glucose 4-epimerase (galE), found in Salmonella typhi.